Reading from the N-terminus, the 228-residue chain is Rab-like protein 2B (228 aa).

GTP-binding positions include 28–35 (GDSAVGKS), 76–80 (DTAGQ), and 133–136 (NKID). The disordered stretch occupies residues 200–228 (LEQEEEDVPDQEQSSSIETPSEEAASPHS).

This sequence belongs to the small GTPase superfamily. Rab family. Interacts (in its GTP-bound form) with CEP19 (via residues 121-150); this interaction is required for its localization to the mother centriole and cilium basal body. Interacts (in its GTP-bound form) with the intraflagellar transport (IFT) complex B (via the IFT74-IFT81 heterodimer). Binding to CEP19 and the IFT74-IFT81 heterodimer is mutually exclusive. Expressed in the testis.

It is found in the cytoplasm. The protein localises to the cytoskeleton. It localises to the microtubule organizing center. The protein resides in the centrosome. Its subcellular location is the centriole. It is found in the cilium basal body. In terms of biological role, small GTPase required for ciliation. Activated in a guanine nucleotide exchange factor (GEF)-independent manner via its intrinsic GDP for GTP nucleotide exchange ability. Involved in ciliary assembly by binding the intraflagellar transport (IFT) complex B from the large pool pre-docked at the base of the cilium and thus triggers its entry into the cilia. In Homo sapiens (Human), this protein is Rab-like protein 2B (RABL2B).